The following is a 255-amino-acid chain: Small ribosomal subunit protein eS1 (255 aa).

Residues 1–18 (MAVGKNKRLSKGKKGLKK) are compositionally biased toward basic residues. Positions 1–28 (MAVGKNKRLSKGKKGLKKRTQDPFSRKD) are disordered. Residue Ala-2 is modified to N-acetylalanine; partial. Basic and acidic residues predominate over residues 19–28 (RTQDPFSRKD).

Belongs to the eukaryotic ribosomal protein eS1 family. In terms of assembly, component of the small ribosomal subunit. Mature ribosomes consist of a small (40S) and a large (60S) subunit. The 40S subunit contains about 33 different proteins and 1 molecule of RNA (18S). The 60S subunit contains about 49 different proteins and 3 molecules of RNA (25S, 5.8S and 5S).

The protein resides in the cytoplasm. The protein is Small ribosomal subunit protein eS1 of Ajellomyces capsulatus (strain NAm1 / WU24) (Darling's disease fungus).